The sequence spans 437 residues: uncharacterized protein (437 aa).

The helical transmembrane segment at 47 to 67 (LLIILIGFILLSSISAIQIDA) threads the bilayer.

It is found in the membrane. This is an uncharacterized protein from Methanocaldococcus jannaschii (strain ATCC 43067 / DSM 2661 / JAL-1 / JCM 10045 / NBRC 100440) (Methanococcus jannaschii).